Reading from the N-terminus, the 32-residue chain is VIGGDECDINEHRFLVFLTXASGLACGGTLIN.

Residues 1–32 (VIGGDECDINEHRFLVFLTXASGLACGGTLIN) enclose the Peptidase S1 domain.

It belongs to the peptidase S1 family. Snake venom subfamily. As to quaternary structure, monomer. Contains 6 disulfide bonds. Post-translationally, glycosylated. As to expression, expressed by the venom gland.

Its subcellular location is the secreted. Cleaves a kininogen analog with the release of kallidin (lysyl-bradykinin). Completely cleaves fibrinogen Aalpha chain, partially cleaves Bbeta chain and has no activity on gamma chain. In Bitis arietans (African puff adder), this protein is Snake venom serine proteinase.